The primary structure comprises 693 residues: Kinesin-like protein KIFC1 (693 aa).

Disordered regions lie at residues 1–24 and 48–156; these read MRGR…VRTT and VKSS…KRPA. Composition is skewed to low complexity over residues 49–59 and 127–138; these read KSSSRLPLPGS and QKPAPAAPAQKP. Phosphoserine is present on residues Ser-52 and Ser-59. Positions 165–334 form a coiled coil; sequence DLHEELKQYR…QELKGNIRVF (170 aa). Residues 330–683 enclose the Kinesin motor domain; sequence NIRVFCRVRP…LRFASKVNQC (354 aa). Thr-379 carries the phosphothreonine modification. Residue 430–437 coordinates ATP; sequence GQTGSGKT.

This sequence belongs to the TRAFAC class myosin-kinesin ATPase superfamily. Kinesin family. NCD subfamily. In terms of assembly, binds NUBP1 and NUBP2. Interacts with PPP1R42.

Its subcellular location is the nucleus. It localises to the cytoplasm. The protein resides in the cytoskeleton. It is found in the microtubule organizing center. The protein localises to the centrosome. Its subcellular location is the spindle. It localises to the early endosome. Minus end-directed microtubule-dependent motor required for bipolar spindle formation. May contribute to movement of early endocytic vesicles. Regulates cilium formation and structure. The protein is Kinesin-like protein KIFC1 of Rattus norvegicus (Rat).